The primary structure comprises 327 residues: Putative D-threonate 4-phosphate dehydrogenase (327 aa).

Substrate contacts are provided by His139 and Thr140. Residues His169, His213, and His268 each coordinate a divalent metal cation. 3 residues coordinate substrate: Lys276, Asn285, and Arg294.

Belongs to the PdxA family. PdxA2 subfamily. As to quaternary structure, homodimer. A divalent metal cation serves as cofactor.

The enzyme catalyses 4-O-phospho-D-threonate + NAD(+) = dihydroxyacetone phosphate + CO2 + NADH. Catalyzes the NAD-dependent oxidation and subsequent decarboxylation of D-threonate 4-phosphate to produce dihydroxyacetone phosphate (DHAP). The sequence is that of Putative D-threonate 4-phosphate dehydrogenase from Salmonella typhi.